The primary structure comprises 59 residues: MDHRLLEIIACPVCHGKLIFDKENSELICKIDHLAYPVRDNIPVLLENEARELSLEEEK.

The protein belongs to the UPF0434 family.

This Proteus mirabilis (strain HI4320) protein is UPF0434 protein PMI0721.